The sequence spans 636 residues: Threonine--tRNA ligase (636 aa).

One can recognise a TGS domain in the interval 1–61 (MPVITLPDGS…TQDASLQLIT (61 aa)). Residues 243–534 (DHRKIGKTLD…LIEEFTGKFP (292 aa)) form a catalytic region. Zn(2+) contacts are provided by C334, H385, and H511.

This sequence belongs to the class-II aminoacyl-tRNA synthetase family. In terms of assembly, homodimer. It depends on Zn(2+) as a cofactor.

The protein resides in the cytoplasm. The enzyme catalyses tRNA(Thr) + L-threonine + ATP = L-threonyl-tRNA(Thr) + AMP + diphosphate + H(+). In terms of biological role, catalyzes the attachment of threonine to tRNA(Thr) in a two-step reaction: L-threonine is first activated by ATP to form Thr-AMP and then transferred to the acceptor end of tRNA(Thr). Also edits incorrectly charged L-seryl-tRNA(Thr). The protein is Threonine--tRNA ligase of Colwellia psychrerythraea (strain 34H / ATCC BAA-681) (Vibrio psychroerythus).